Here is a 1110-residue protein sequence, read N- to C-terminus: Sex-determining transformer protein 1 (1110 aa).

2 disordered regions span residues 1–103 and 170–202; these read MMAP…AQQS and TINGKRVGRPPGTFKRPQNNAANSSNSGNDSDM. Basic and acidic residues predominate over residues 44–61; that stretch reads GSEDKQPGGGDVKTENDP. The span at 65–90 shows a compositional bias: polar residues; the sequence is GLGSATSNFIQSSVPPSHQTLSNPLQ. Positions 188 to 201 are enriched in low complexity; the sequence is NNAANSSNSGNDSD. The C2H2-type 1; low DNA-binding affinity zinc finger occupies 208 to 233; it reads LTCRWKSCNSSFQTLKALVDHVQESH. A C2H2-type 2; low DNA-binding affinity zinc finger spans residues 244-270; that stretch reads WRCEWEGCDRNETFKALYMLIVHVRRH. 3 consecutive C2H2-type zinc fingers follow at residues 276-300, 306-331, and 337-362; these read NKCEYPGCGKEYSRLENLKTHRRTH, YKCEFADCEKAFSNASDRAKHQNRTH, and YSCQIPQCTKSYTDPSSLRKHIKAVH. Disordered stretches follow at residues 363 to 397, 594 to 682, 875 to 895, and 1057 to 1110; these read GDDEYEKAKKSRPANYSNRRRPDHRLAPPTGAMSH, EVEP…GSGE, RNVGGFGDEEDRNNRGHDQDR, and QEQP…RHQF. A compositionally biased stretch (low complexity) spans 597–606; it reads PLQQQQQQEP. Residues 641-652 show a composition bias toward gly residues; that stretch reads GNNGDGGFGGSG. The segment covering 669 to 678 has biased composition (polar residues); it reads PISQNGSRAS. Positions 886–895 are enriched in basic and acidic residues; that stretch reads RNNRGHDQDR. Positions 1057–1066 are enriched in polar residues; it reads QEQPTSSFSS. The span at 1076-1086 shows a compositional bias: pro residues; that stretch reads ALPPPPPPPAP. Residues 1092-1103 are compositionally biased toward basic and acidic residues; sequence SADNKDDSENIP.

The protein belongs to the GLI C2H2-type zinc-finger protein family. Interacts with the MX regulatory domain of tra-2. As to expression, expressed in intestine and gonads (at protein level).

The protein resides in the cytoplasm. Its subcellular location is the nucleus. Functionally, plays a major role in controlling sexual phenotype. Terminal global regulator in a well-characterized cascade of sex-determining genes. Promotes female development. Interacts with tra-2 to promote spermatogenesis. Promotes spermatogenesis through the Tip60 HAT complex and by regulating the expression of genes, such as fog-3, required for male development. Association with chromatin and at the fog-3 promoter requires wdr-5.1, and may also require wdr-5.2. With trr-1, activates the fog-3 gene to determine sperm/oocyte cell fate. In hermaphrodites, binds to an intronic regulatory site in the ceh-30 gene, preventing ceh-30 transcription and thereby preventing survival of the CEM (cephalic male) sensory neurons. Represses the expression of the transcription factor dmd-3 in hermaphrodites to govern the timing and extent of male tail tip morphogenesis. Plays a role in controlling the sex-specific differentiation of PHC sensory neurons and represses the development of male-specific morphological features. In Caenorhabditis elegans, this protein is Sex-determining transformer protein 1.